We begin with the raw amino-acid sequence, 130 residues long: Small ribosomal subunit protein uS9 (130 aa).

It belongs to the universal ribosomal protein uS9 family.

This Yersinia enterocolitica serotype O:8 / biotype 1B (strain NCTC 13174 / 8081) protein is Small ribosomal subunit protein uS9.